Consider the following 92-residue polypeptide: Small ribosomal subunit protein uS19 (92 aa).

This sequence belongs to the universal ribosomal protein uS19 family.

Functionally, protein S19 forms a complex with S13 that binds strongly to the 16S ribosomal RNA. This is Small ribosomal subunit protein uS19 from Trichlorobacter lovleyi (strain ATCC BAA-1151 / DSM 17278 / SZ) (Geobacter lovleyi).